Here is a 313-residue protein sequence, read N- to C-terminus: Ribosomal RNA small subunit methyltransferase H (313 aa).

Residues glycine 35 to histidine 37, aspartate 55, phenylalanine 81, aspartate 103, and glutamine 110 contribute to the S-adenosyl-L-methionine site.

Belongs to the methyltransferase superfamily. RsmH family.

The protein resides in the cytoplasm. It carries out the reaction cytidine(1402) in 16S rRNA + S-adenosyl-L-methionine = N(4)-methylcytidine(1402) in 16S rRNA + S-adenosyl-L-homocysteine + H(+). In terms of biological role, specifically methylates the N4 position of cytidine in position 1402 (C1402) of 16S rRNA. This Pseudomonas syringae pv. tomato (strain ATCC BAA-871 / DC3000) protein is Ribosomal RNA small subunit methyltransferase H.